The following is a 414-amino-acid chain: Histidine--tRNA ligase (414 aa).

This sequence belongs to the class-II aminoacyl-tRNA synthetase family. Homodimer.

The protein localises to the cytoplasm. The enzyme catalyses tRNA(His) + L-histidine + ATP = L-histidyl-tRNA(His) + AMP + diphosphate + H(+). In Ehrlichia ruminantium (strain Gardel), this protein is Histidine--tRNA ligase.